Reading from the N-terminus, the 276-residue chain is Undecaprenyl-diphosphatase (276 aa).

6 helical membrane-spanning segments follow: residues 43–63 (RAMAFNIIIQLAAILAVVWEF), 85–105 (GNLLLAFMPAVVLGVLFADLI), 109–129 (LFNPITVATALVVGGVIMLWA), 183–203 (AATEFSFFLAMPTMVGAAVYS), 214–234 (ADLPVFAIGFVTSFIFAMIAV), and 249–269 (FAWYRIVFGLLILATWQFGWV).

The protein belongs to the UppP family.

It localises to the cell inner membrane. It catalyses the reaction di-trans,octa-cis-undecaprenyl diphosphate + H2O = di-trans,octa-cis-undecaprenyl phosphate + phosphate + H(+). Functionally, catalyzes the dephosphorylation of undecaprenyl diphosphate (UPP). Confers resistance to bacitracin. The chain is Undecaprenyl-diphosphatase from Pseudomonas putida (strain GB-1).